The chain runs to 536 residues: uncharacterized protein (536 aa).

The Cytoplasmic segment spans residues 1 to 8 (MVSIKRYE). Residues 9-29 (IISFVIAAFFFLSGLSMWIAF) traverse the membrane as a helical segment. At 30–502 (WPIFNSELRS…VWLGVIIVPR (473 aa)) the chain is on the extracellular side. N73, N236, N363, and N376 each carry an N-linked (GlcNAc...) asparagine glycan. The helical transmembrane segment at 503–523 (IIEYLKFVLIFISICILTTLL) threads the bilayer. At 524–536 (VIRVRVKGTVSVV) the chain is on the cytoplasmic side.

It belongs to the CD36 family.

It is found in the membrane. This is an uncharacterized protein from Caenorhabditis elegans.